The primary structure comprises 268 residues: Fc receptor-like protein 6 (268 aa).

Residues 1–16 form the signal peptide; that stretch reads MLLWMVLLLCESMAEA. Over 17 to 215 the chain is Extracellular; it reads QELFPNPELT…TAWIKSNMLP (199 aa). One can recognise an Ig-like C2-type domain in the interval 114 to 194; it reads PVLTLQHEAT…AKNNISREIS (81 aa). The cysteines at positions 135 and 183 are disulfide-linked. N-linked (GlcNAc...) asparagine glycans are attached at residues Asn180 and Asn188. Residues 216-236 traverse the membrane as a helical segment; it reads IWLPASLLGGMVIAAVVLMYF. Residues 237 to 268 lie on the Cytoplasmic side of the membrane; that stretch reads FKPCKKHARPETPTLKEPDSFLYVSVDNQRYK.

Interacts with class II MHC.

The protein localises to the cell membrane. Functionally, acts as a MHC class II receptor. When stimulated on its own, does not play a role in cytokine production or the release of cytotoxic granules by NK cells and cytotoxic CD8(+) T cells. Does not act as an Fc receptor. The protein is Fc receptor-like protein 6 (Fcrl6) of Mus musculus (Mouse).